The chain runs to 488 residues: Cobyric acid synthase (488 aa).

The region spanning 255-442 (ALKIAVPVLP…LHGLFGSDAY (188 aa)) is the GATase cobBQ-type domain. C337 functions as the Nucleophile in the catalytic mechanism. H434 is an active-site residue.

It belongs to the CobB/CobQ family. CobQ subfamily.

It participates in cofactor biosynthesis; adenosylcobalamin biosynthesis. Catalyzes amidations at positions B, D, E, and G on adenosylcobyrinic A,C-diamide. NH(2) groups are provided by glutamine, and one molecule of ATP is hydrogenolyzed for each amidation. This chain is Cobyric acid synthase, found in Rhizobium johnstonii (strain DSM 114642 / LMG 32736 / 3841) (Rhizobium leguminosarum bv. viciae).